The chain runs to 480 residues: Pre-glycoprotein polyprotein GP complex (480 aa).

The N-myristoyl glycine; by host moiety is linked to residue glycine 2. Residues 2 to 17 are Extracellular-facing; sequence GQLVSFFQEIPVFFQE. A helical membrane pass occupies residues 18 to 33; sequence ALNIALAVVTLLAIVK. Residues 34 to 58 lie on the Cytoplasmic side of the membrane; it reads GVLNLWKSGLFQLLMFLILAGRSCS. Zn(2+) is bound at residue cysteine 57. At 59 to 419 the chain is on the extracellular side; that stretch reads FRIGYHTSFE…QGRTPLTLVD (361 aa). 4 disulfides stabilise this stretch: cysteine 85–cysteine 221, cysteine 266–cysteine 279, cysteine 288–cysteine 297, and cysteine 351–cysteine 372. Asparagine 88, asparagine 174, and asparagine 214 each carry an N-linked (GlcNAc...) asparagine; by host glycan. N-linked (GlcNAc...) asparagine; by host glycans are attached at residues asparagine 352, asparagine 360, asparagine 377, and asparagine 382. The helical transmembrane segment at 420 to 440 threads the bilayer; the sequence is LCFWSAVFYTTTLFLHLVGFP. The Cytoplasmic segment spans residues 441–480; sequence THRHISGEPCPLPHRLNRHGACNCGRFKRLKKPLVWYKHH. Zn(2+) is bound by residues histidine 442, histidine 444, cysteine 450, histidine 454, cysteine 462, cysteine 464, and histidine 480.

This sequence belongs to the arenaviridae GPC protein family. Interacts with glycoprotein G2. Part of the GP complex (GP-C) together with glycoprotein G1 and glycoprotein G2. The GP-complex interacts with protein Z, which interacts with ribonucleocapsid; these interactions may induce virion budding. As to quaternary structure, homotrimer; disulfide-linked. In pre-fusion state, G1 homotrimers bind G2 homotrimers via ionic interactions. Part of the GP complex (GP-C) together with glycoprotein G2 and the stable signal peptide. The GP-complex interacts with protein Z, which interacts with ribonucleocapsid; these interactions may induce virion budding. In terms of assembly, homotrimer. Interacts with the stable signal peptide. In pre-fusion state, G2 homotrimers bind G1 homotrimers via ionic interactions. Part of the GP complex (GP-C) together with glycoprotein G1 and the stable signal peptide. Acidification in the endosome triggers rearrangements, which ultimately leads to a 6 helix bundle formed by the two heptad repeat domains (HR1 and HR2) in post-fusion state. The GP-complex interacts with protein Z, which interacts with ribonucleocapsid; these interactions may induce virion budding. Specific enzymatic cleavages in vivo yield mature proteins. GP-C polyprotein is cleaved in the endoplasmic reticulum by the host protease MBTPS1. Only cleaved glycoprotein is incorporated into virions. In terms of processing, the SSP remains stably associated with the GP complex following cleavage by signal peptidase and plays crucial roles in the trafficking of GP through the secretory pathway. Post-translationally, myristoylation is necessary for GP2-mediated fusion activity.

The protein localises to the virion membrane. The protein resides in the host endoplasmic reticulum membrane. Its subcellular location is the host Golgi apparatus membrane. It is found in the host cell membrane. Its function is as follows. Functions as a cleaved signal peptide that is retained as the third component of the GP complex (GP-C). Helps to stabilize the spike complex in its native conformation. The SSP is required for efficient glycoprotein expression, post-translational maturation cleavage of G1 and G2, glycoprotein transport to the cell surface plasma membrane, formation of infectious virus particles, and acid pH-dependent glycoprotein-mediated cell fusion. Forms the virion spikes together with glycoprotein G2. The glycoprotein spike trimers are connected to the underlying matrix. Interacts with the host receptor leading to virus endocytosis. In terms of biological role, forms the virion spikes together with glycoprotein G1. The glycoprotein spike trimers are connected to the underlying matrix. Class I viral fusion protein that directs fusion of viral and host endosomal membranes, leading to delivery of the nucleocapsid into the cytoplasm. Membrane fusion is mediated by irreversible conformational changes induced by acidification. This chain is Pre-glycoprotein polyprotein GP complex, found in Cupixi mammarenavirus (isolate Rat/Brasil/BeAn 119303/1970) (CPXV).